The following is a 987-amino-acid chain: Mediator of RNA polymerase II transcription subunit 24 (987 aa).

6 short sequence motifs (LXXLL motif) span residues 128 to 132, 344 to 348, 446 to 450, 555 to 559, 786 to 790, and 855 to 859; these read LHWLL, LTPLL, LDLLL, LVALL, LPGLL, and LMRLL. A phosphoserine mark is found at Ser-860 and Ser-871.

It belongs to the Mediator complex subunit 24 family. In terms of assembly, component of the Mediator complex, which is composed of MED1, MED4, MED6, MED7, MED8, MED9, MED10, MED11, MED12, MED13, MED13L, MED14, MED15, MED16, MED17, MED18, MED19, MED20, MED21, MED22, MED23, MED24, MED25, MED26, MED27, MED29, MED30, MED31, CCNC, CDK8 and CDC2L6/CDK11. The MED12, MED13, CCNC and CDK8 subunits form a distinct module termed the CDK8 module. Mediator containing the CDK8 module is less active than Mediator lacking this module in supporting transcriptional activation. Individual preparations of the Mediator complex lacking one or more distinct subunits have been variously termed ARC, CRSP, DRIP, PC2, SMCC and TRAP. Interacts with AR.

It localises to the nucleus. Component of the Mediator complex, a coactivator involved in the regulated transcription of nearly all RNA polymerase II-dependent genes. Mediator functions as a bridge to convey information from gene-specific regulatory proteins to the basal RNA polymerase II transcription machinery. Mediator is recruited to promoters by direct interactions with regulatory proteins and serves as a scaffold for the assembly of a functional preinitiation complex with RNA polymerase II and the general transcription factors. This chain is Mediator of RNA polymerase II transcription subunit 24 (Med24), found in Rattus norvegicus (Rat).